The primary structure comprises 412 residues: Palmitoyltransferase ZDHHC11 (412 aa).

Residues 1 to 42 (MDTRSGSQCSVTPEAILNNEKLVLPPRISRVNGWSLPLHYFQ) are Cytoplasmic-facing. Residues 43–63 (VVTWAVFVGLSSATFGIFIPF) form a helical membrane-spanning segment. Topologically, residues 64 to 69 (LPHAWK) are lumenal. Residues 70–90 (YIAYVVTGGIFSFHLVVHLIA) form a helical membrane-spanning segment. Residues 91–176 (SCIDPADSNV…YWFFFSTVAS (86 aa)) are Cytoplasmic-facing. Positions 125-175 (QFCHLCKVTVNKKTKHCISCNKCVSGFDHHCKWINNCVGSRNYWFFFSTVA) constitute a DHHC domain. Residue C155 is the S-palmitoyl cysteine intermediate of the active site. The helical transmembrane segment at 177 to 197 (ATAGMLCLIAILLYVLVQYLV) threads the bilayer. Over 198-230 (NPGVLRTDPRYEDVKNMNTWLLFLPLFPVQVQT) the chain is Lumenal. The interval 198–412 (NPGVLRTDPR…MKTDSAESED (215 aa)) is mediates interaction with IRF3 and STING1. A helical transmembrane segment spans residues 231–251 (LIVVIIGMLVLLLDFLGLVHL). Topologically, residues 252 to 412 (GQLLIFHIYL…MKTDSAESED (161 aa)) are cytoplasmic. Residues 374 to 412 (HPDGGSMAQEADDAPSISTLGLQQETTEPMKTDSAESED) are disordered. Residues 389 to 400 (SISTLGLQQETT) show a composition bias toward polar residues. A compositionally biased stretch (basic and acidic residues) spans 401-412 (EPMKTDSAESED).

Belongs to the DHHC palmitoyltransferase family. As to quaternary structure, interacts with IRF3 and STING1; in presence of DNA viruses recruits IRF3 to STING1 promoting IRF3 phosphorylation and activation. Expressed in testis.

It localises to the endoplasmic reticulum membrane. The catalysed reaction is L-cysteinyl-[protein] + hexadecanoyl-CoA = S-hexadecanoyl-L-cysteinyl-[protein] + CoA. In terms of biological role, endoplasmic reticulum-localized palmitoyltransferase that could catalyze the addition of palmitate onto various protein substrates and be involved in a variety of cellular processes. Has a palmitoyltransferase activity toward NCDN and regulates NCDN association with endosome membranes through this palmitoylation. May play a role in cell proliferation. Functionally, also has a palmitoyltransferase activity-independent function in DNA virus-triggered and CGAS-mediated innate immune response. Functions as an adapter that recruits IRF3 to STING1 to promote the activation of that key transcriptional regulator of type I interferon (IFN)-dependent immune response. This chain is Palmitoyltransferase ZDHHC11, found in Homo sapiens (Human).